The chain runs to 111 residues: Nucleoid-associated protein NMC1380 (111 aa).

It belongs to the YbaB/EbfC family. In terms of assembly, homodimer.

The protein localises to the cytoplasm. Its subcellular location is the nucleoid. Its function is as follows. Binds to DNA and alters its conformation. May be involved in regulation of gene expression, nucleoid organization and DNA protection. The protein is Nucleoid-associated protein NMC1380 of Neisseria meningitidis serogroup C / serotype 2a (strain ATCC 700532 / DSM 15464 / FAM18).